A 420-amino-acid chain; its full sequence is Nucleobindin-2 (420 aa).

Residues Met1 to Ala24 form the signal peptide. The DNA-binding element occupies Lys171–Pro223. Residues Leu195 to Lys212 show a composition bias toward basic and acidic residues. Positions Leu195–Ser225 are disordered. The tract at residues Lys213 to Ile420 is binds to necdin. EF-hand domains lie at Pro241–Lys276 and Glu293–Leu328. Residues Asp254 and Asn256 each contribute to the Ca(2+) site. At Ser257 the chain carries Phosphoserine. The Ca(2+) site is built by Asp258, Glu265, Asp306, Asn308, Asp310, and Glu317. Positions Glu304–Glu334 match the GBA motif. Ser332 carries the phosphoserine modification. The disordered stretch occupies residues Gln398–Ile420.

This sequence belongs to the nucleobindin family. As to quaternary structure, interacts (via GBA motif) with guanine nucleotide-binding protein G(i) alpha subunit GNAI3. Preferentially interacts with inactive rather than active GNAI3. Interaction with GNAI3 is inhibited when NUCB2 binds calcium, probably due to a conformational change which renders the GBA motif inaccessible. Binds to the postmitotic growth suppressor NDN; coexpression abolishes NUCB2 secretion. Interacts with MC4R. Predominantly expressed in spleen, testis and normal stomach.

The protein resides in the golgi apparatus. It is found in the membrane. Its subcellular location is the cytoplasm. It localises to the secreted. The protein localises to the endoplasmic reticulum. The protein resides in the nucleus envelope. Functionally, calcium-binding protein which may have a role in calcium homeostasis. Acts as a non-receptor guanine nucleotide exchange factor which binds to and activates guanine nucleotide-binding protein (G-protein) alpha subunit GNAI3. Anorexigenic peptide, seems to play an important role in hypothalamic pathways regulating food intake and energy homeostasis, acting in a leptin-independent manner. May also exert hypertensive roles and modulate blood pressure through directly acting on peripheral arterial resistance. In intestinal epithelial cells, plays a role in the inhibition of hepatic glucose production via MC4R receptor leading to increased cyclic adenosine monophosphate (cAMP) levels and glucagon-like peptide 1 (GLP-1) secretion. The sequence is that of Nucleobindin-2 from Homo sapiens (Human).